Here is a 1819-residue protein sequence, read N- to C-terminus: U3 small nucleolar RNA-associated protein 10 (1819 aa).

One copy of the HEAT repeat lies at Leu-1779 to Tyr-1817.

It belongs to the HEATR1/UTP10 family. As to quaternary structure, component of the ribosomal small subunit (SSU) processome.

It is found in the nucleus. The protein localises to the nucleolus. In terms of biological role, involved in nucleolar processing of pre-18S ribosomal RNA. Involved in ribosome biosynthesis. In Meyerozyma guilliermondii (strain ATCC 6260 / CBS 566 / DSM 6381 / JCM 1539 / NBRC 10279 / NRRL Y-324) (Yeast), this protein is U3 small nucleolar RNA-associated protein 10.